A 262-amino-acid chain; its full sequence is tRNA pseudouridine synthase A (262 aa).

The Nucleophile role is filled by Asp-51. A substrate-binding site is contributed by Tyr-109.

This sequence belongs to the tRNA pseudouridine synthase TruA family. As to quaternary structure, homodimer.

The enzyme catalyses uridine(38/39/40) in tRNA = pseudouridine(38/39/40) in tRNA. Functionally, formation of pseudouridine at positions 38, 39 and 40 in the anticodon stem and loop of transfer RNAs. This chain is tRNA pseudouridine synthase A, found in Actinobacillus pleuropneumoniae serotype 7 (strain AP76).